Consider the following 221-residue polypeptide: Ependymin-1 (221 aa).

Positions 1–21 (MQAFAVAALSIWLCLGATTLA) are cleaved as a signal peptide. N-linked (GlcNAc...) asparagine glycans are attached at residues N33, N73, and N97.

It belongs to the ependymin family. Post-translationally, binds calcium through the terminal sialic acids. As to expression, EPDs are synthesized in the meninx and secreted in the cerebrospinal fluid.

Its subcellular location is the secreted. In terms of biological role, may play a role in neural plasticity. May be involved during axon regeneration. This chain is Ependymin-1 (epd1), found in Oncorhynchus mykiss (Rainbow trout).